Here is a 483-residue protein sequence, read N- to C-terminus: MKLKQLLQNIDYDLIKGDININIEGISYNSKKVKQNYVFVSIKGARFDGHDFIKEAAQNGAAAVIIDEDFHDSIENTTLVKVKNSKVALACLCNLFYEEPSRELNLVGVTGTNGKTTVIHYIRDMLEAFGNSTGTIGTLGYELKDKEINVEKINPTTPEALELNQILRDFIDKGAKNAVMEVTSSALMKHRVDYCSFKVGVFTNLSQDHLDEHGTIENYKNEKIKLFKMCPVGVINLDDNIAGEIIEKGTCEFFTYGVLTNADLTASDMVYKPNSVSFNVHYKGISSKVKVNVPGEFTVYNVLAAIGSLLCLGIDFESILKLVSSIKPVLGRLETINNPLNKNIIIDYAHTPDSLEKLLIMAREMTNGRIITVFGCGGDRDKSKRGLMGMAVGILSDYCIITSDNPRHEKPEDIIRDIERGMQTINSSYEKITDRRCAIKRGIEILKEEDILIIAGKGHEDYQIIGDNKVHFDDREVVNELLG.

S30 contributes to the UDP-N-acetyl-alpha-D-muramoyl-L-alanyl-D-glutamate binding site. 111–117 (GTNGKTT) contacts ATP. Residues 156–157 (TT), T183, and R191 contribute to the UDP-N-acetyl-alpha-D-muramoyl-L-alanyl-D-glutamate site. Position 223 is an N6-carboxylysine (K223). Residues R380, 404–407 (DNPR), G456, and E460 each bind meso-2,6-diaminopimelate. A Meso-diaminopimelate recognition motif motif is present at residues 404-407 (DNPR).

The protein belongs to the MurCDEF family. MurE subfamily. It depends on Mg(2+) as a cofactor. Post-translationally, carboxylation is probably crucial for Mg(2+) binding and, consequently, for the gamma-phosphate positioning of ATP.

The protein resides in the cytoplasm. It catalyses the reaction UDP-N-acetyl-alpha-D-muramoyl-L-alanyl-D-glutamate + meso-2,6-diaminopimelate + ATP = UDP-N-acetyl-alpha-D-muramoyl-L-alanyl-gamma-D-glutamyl-meso-2,6-diaminopimelate + ADP + phosphate + H(+). It functions in the pathway cell wall biogenesis; peptidoglycan biosynthesis. Catalyzes the addition of meso-diaminopimelic acid to the nucleotide precursor UDP-N-acetylmuramoyl-L-alanyl-D-glutamate (UMAG) in the biosynthesis of bacterial cell-wall peptidoglycan. The polypeptide is UDP-N-acetylmuramoyl-L-alanyl-D-glutamate--2,6-diaminopimelate ligase 2 (Clostridium acetobutylicum (strain ATCC 824 / DSM 792 / JCM 1419 / IAM 19013 / LMG 5710 / NBRC 13948 / NRRL B-527 / VKM B-1787 / 2291 / W)).